The chain runs to 195 residues: Imidazoleglycerol-phosphate dehydratase (195 aa).

Belongs to the imidazoleglycerol-phosphate dehydratase family.

The protein localises to the cytoplasm. It carries out the reaction D-erythro-1-(imidazol-4-yl)glycerol 3-phosphate = 3-(imidazol-4-yl)-2-oxopropyl phosphate + H2O. Its pathway is amino-acid biosynthesis; L-histidine biosynthesis; L-histidine from 5-phospho-alpha-D-ribose 1-diphosphate: step 6/9. The chain is Imidazoleglycerol-phosphate dehydratase from Maridesulfovibrio salexigens (strain ATCC 14822 / DSM 2638 / NCIMB 8403 / VKM B-1763) (Desulfovibrio salexigens).